The primary structure comprises 322 residues: uncharacterized protein (322 aa).

The segment at 1–63 (MFKIRKRSVP…DEASSSDSHY (63 aa)) is disordered. A compositionally biased stretch (basic and acidic residues) spans 34 to 49 (FVDDHGKPIAEYRDFP). The segment at 245-274 (WKVDRICTYYINRPDKCTRGDNCRFKHDDV) adopts a C3H1-type zinc-finger fold. Positions 278–322 (HRQKEIQSSRNQSWHHRTSSHKYSSENSDHRGYRRHRSRSPHARQ) are disordered. The span at 309–322 (GYRRHRSRSPHARQ) shows a compositional bias: basic residues.

This is an uncharacterized protein from Caenorhabditis elegans.